The sequence spans 242 residues: 4-hydroxy-tetrahydrodipicolinate reductase (242 aa).

Residues 79-81 (ATT) and 103-106 (SANM) contribute to the NAD(+) site. His135 acts as the Proton donor/acceptor in catalysis. His136 is a (S)-2,3,4,5-tetrahydrodipicolinate binding site. Lys139 serves as the catalytic Proton donor. (S)-2,3,4,5-tetrahydrodipicolinate is bound at residue 145 to 146 (GT).

The protein belongs to the DapB family.

It localises to the cytoplasm. It carries out the reaction (S)-2,3,4,5-tetrahydrodipicolinate + NAD(+) + H2O = (2S,4S)-4-hydroxy-2,3,4,5-tetrahydrodipicolinate + NADH + H(+). The enzyme catalyses (S)-2,3,4,5-tetrahydrodipicolinate + NADP(+) + H2O = (2S,4S)-4-hydroxy-2,3,4,5-tetrahydrodipicolinate + NADPH + H(+). Its pathway is amino-acid biosynthesis; L-lysine biosynthesis via DAP pathway; (S)-tetrahydrodipicolinate from L-aspartate: step 4/4. Functionally, catalyzes the conversion of 4-hydroxy-tetrahydrodipicolinate (HTPA) to tetrahydrodipicolinate. The protein is 4-hydroxy-tetrahydrodipicolinate reductase of Staphylococcus carnosus (strain TM300).